Consider the following 132-residue polypeptide: Small ribosomal subunit protein uS11 (132 aa).

It belongs to the universal ribosomal protein uS11 family. Part of the 30S ribosomal subunit. Interacts with proteins S7 and S18. Binds to IF-3.

In terms of biological role, located on the platform of the 30S subunit, it bridges several disparate RNA helices of the 16S rRNA. Forms part of the Shine-Dalgarno cleft in the 70S ribosome. This is Small ribosomal subunit protein uS11 from Chlamydia trachomatis serovar A (strain ATCC VR-571B / DSM 19440 / HAR-13).